A 1155-amino-acid chain; its full sequence is DNA-directed RNA polymerase subunit beta (1155 aa).

This sequence belongs to the RNA polymerase beta chain family. The RNAP catalytic core consists of 2 alpha, 1 beta, 1 beta' and 1 omega subunit. When a sigma factor is associated with the core the holoenzyme is formed, which can initiate transcription.

It carries out the reaction RNA(n) + a ribonucleoside 5'-triphosphate = RNA(n+1) + diphosphate. Functionally, DNA-dependent RNA polymerase catalyzes the transcription of DNA into RNA using the four ribonucleoside triphosphates as substrates. The polypeptide is DNA-directed RNA polymerase subunit beta (Borrelia turicatae (strain 91E135)).